Here is a 971-residue protein sequence, read N- to C-terminus: Exportin-2 (971 aa).

The 74-residue stretch at Ala29 to Ser102 folds into the Importin N-terminal domain.

It belongs to the XPO2/CSE1 family. Interacts with cftr.

It localises to the cytoplasm. The protein localises to the nucleus. In terms of biological role, export receptor for importin alpha. Mediates importin-alpha re-export from the nucleus to the cytoplasm after import substrates have been released into the nucleoplasm. Negatively regulates fluid secretion and plays a role in fluid homeostasis by down-regulating cftr activity. This Pagrus major (Red sea bream) protein is Exportin-2 (cse1l).